Reading from the N-terminus, the 426-residue chain is Histidine--tRNA ligase (426 aa).

It belongs to the class-II aminoacyl-tRNA synthetase family. In terms of assembly, homodimer.

It localises to the cytoplasm. The catalysed reaction is tRNA(His) + L-histidine + ATP = L-histidyl-tRNA(His) + AMP + diphosphate + H(+). The sequence is that of Histidine--tRNA ligase (hisS) from Streptococcus dysgalactiae subsp. equisimilis (Streptococcus equisimilis).